The chain runs to 617 residues: Tetratricopeptide repeat protein 39B (617 aa).

TPR repeat units lie at residues 328-361 (SLIL…QEEW) and 561-594 (PFTL…YKDY).

Belongs to the TTC39 family.

Its function is as follows. Regulates high density lipoprotein (HDL) cholesterol metabolism by promoting the ubiquitination and degradation of the oxysterols receptors LXR (NR1H2 and NR1H3). This Rattus norvegicus (Rat) protein is Tetratricopeptide repeat protein 39B (Ttc39b).